We begin with the raw amino-acid sequence, 490 residues long: Protein U94 (490 aa).

A PV NS1-Nuc domain is found at 1 to 210 (MFSIINPSDD…SHFNKKPNVK (210 aa)). The SF3 helicase domain occupies 312–463 (DPILAGTILY…IPRNFPVIQK (152 aa)). 338–345 (GPPGCGKS) lines the ATP pocket.

Its subcellular location is the host nucleus. The polypeptide is Protein U94 (U94) (Human herpesvirus 6B (HHV-6 variant B)).